The following is a 573-amino-acid chain: FAD-dependent monooxygenase resA (573 aa).

A signal peptide spans 1-17 (MYDVIVIGAGWCGLVAA). Residue Ile106 coordinates FAD. N-linked (GlcNAc...) asparagine glycosylation is present at Asn235.

It belongs to the FAD-binding monooxygenase family. FAD is required as a cofactor.

Its pathway is antifungal biosynthesis. Functionally, FAD-dependent monooxygenase; part of the gene cluster that mediates the biosynthesis of the tetrahydropyranyl antifungal agent restricticin that acts as an inhibitor of CYP51 and blocks the ergosterol biosynthesis. The highly reducing polyketide synthase resH, the short chain dehydrogenase resG, the cyclase resF, the FAD-dependent monooxygenase resA and the enoylreductase resD are required to generate the first stable intermediate desmethylrestrictinol. ResH with resD biosynthesize the first polyketide chain intermediate that is reduced by resG, followed by epoxidation by resA before 6-endo cyclization via epoxide opening by resF leads to desmethylrestrictinol. The methyltransferase resE then catalyzes the C4 O-methylation of desmethylrestrictinol to produce restrictinol, and the nonribosomal peptide synthetase resC catalyzes the C3 esterification of restrictinol with glycine that leads to restricticin. In Aspergillus sclerotiorum, this protein is FAD-dependent monooxygenase resA.